A 330-amino-acid chain; its full sequence is Methionyl-tRNA formyltransferase (330 aa).

116–119 (SLLP) contacts (6S)-5,6,7,8-tetrahydrofolate.

The protein belongs to the Fmt family.

It catalyses the reaction L-methionyl-tRNA(fMet) + (6R)-10-formyltetrahydrofolate = N-formyl-L-methionyl-tRNA(fMet) + (6S)-5,6,7,8-tetrahydrofolate + H(+). Attaches a formyl group to the free amino group of methionyl-tRNA(fMet). The formyl group appears to play a dual role in the initiator identity of N-formylmethionyl-tRNA by promoting its recognition by IF2 and preventing the misappropriation of this tRNA by the elongation apparatus. The polypeptide is Methionyl-tRNA formyltransferase (Nitratidesulfovibrio vulgaris (strain DP4) (Desulfovibrio vulgaris)).